Here is a 418-residue protein sequence, read N- to C-terminus: Actin-like protein C08B11.6 (418 aa).

Belongs to the actin family. ARP6 subfamily.

It is found in the cytoplasm. Its subcellular location is the cytoskeleton. The polypeptide is Actin-like protein C08B11.6 (arp-6) (Caenorhabditis elegans).